The sequence spans 56 residues: Large ribosomal subunit protein bL32 (56 aa).

A disordered region spans residues 1–34; sequence MAVQQNKPSRSKRGMRRAHDALKTSTISVDKTSG.

Belongs to the bacterial ribosomal protein bL32 family.

The chain is Large ribosomal subunit protein bL32 from Baumannia cicadellinicola subsp. Homalodisca coagulata.